A 116-amino-acid chain; its full sequence is Ribonuclease P protein component (116 aa).

It belongs to the RnpA family. As to quaternary structure, consists of a catalytic RNA component (M1 or rnpB) and a protein subunit.

The catalysed reaction is Endonucleolytic cleavage of RNA, removing 5'-extranucleotides from tRNA precursor.. In terms of biological role, RNaseP catalyzes the removal of the 5'-leader sequence from pre-tRNA to produce the mature 5'-terminus. It can also cleave other RNA substrates such as 4.5S RNA. The protein component plays an auxiliary but essential role in vivo by binding to the 5'-leader sequence and broadening the substrate specificity of the ribozyme. This Acholeplasma laidlawii (strain PG-8A) protein is Ribonuclease P protein component.